A 272-amino-acid polypeptide reads, in one-letter code: Ribosomal RNA small subunit methyltransferase A (272 aa).

S-adenosyl-L-methionine is bound by residues His11, Leu13, Gly38, Glu59, Asp84, and Asn109.

It belongs to the class I-like SAM-binding methyltransferase superfamily. rRNA adenine N(6)-methyltransferase family. RsmA subfamily.

Its subcellular location is the cytoplasm. It carries out the reaction adenosine(1518)/adenosine(1519) in 16S rRNA + 4 S-adenosyl-L-methionine = N(6)-dimethyladenosine(1518)/N(6)-dimethyladenosine(1519) in 16S rRNA + 4 S-adenosyl-L-homocysteine + 4 H(+). Its function is as follows. Specifically dimethylates two adjacent adenosines (A1518 and A1519) in the loop of a conserved hairpin near the 3'-end of 16S rRNA in the 30S particle. May play a critical role in biogenesis of 30S subunits. In Rippkaea orientalis (strain PCC 8801 / RF-1) (Cyanothece sp. (strain PCC 8801)), this protein is Ribosomal RNA small subunit methyltransferase A.